The primary structure comprises 324 residues: Phospho-N-acetylmuramoyl-pentapeptide-transferase (324 aa).

Transmembrane regions (helical) follow at residues 5 to 25 (VILFTIIMGFLISVLLSPIFI), 52 to 72 (PTMGGVMIILSIIATTIVMTM), 77 to 97 (VSMNMILLLFVTVGYGLLGFL), 117 to 137 (LIGQIVIALVFYAVYHFQGMP), 147 to 167 (LSFDFGWIYPVLVIFMLVGGS), 176 to 196 (LDGLLSGTAAIAFGAFAILAW), 203 to 223 (VAIFAVAVVGAVLGFLVFNAH), 227 to 247 (VFMGDTGSLALGGAIVTIAIL), 250 to 270 (LEILLVIIGGVFVIETLSVIL), and 302 to 322 (VVVTFWTAGLLLAVLGIYIEV).

It belongs to the glycosyltransferase 4 family. MraY subfamily. The cofactor is Mg(2+).

The protein localises to the cell membrane. It carries out the reaction UDP-N-acetyl-alpha-D-muramoyl-L-alanyl-gamma-D-glutamyl-meso-2,6-diaminopimeloyl-D-alanyl-D-alanine + di-trans,octa-cis-undecaprenyl phosphate = di-trans,octa-cis-undecaprenyl diphospho-N-acetyl-alpha-D-muramoyl-L-alanyl-D-glutamyl-meso-2,6-diaminopimeloyl-D-alanyl-D-alanine + UMP. Its pathway is cell wall biogenesis; peptidoglycan biosynthesis. Its function is as follows. Catalyzes the initial step of the lipid cycle reactions in the biosynthesis of the cell wall peptidoglycan: transfers peptidoglycan precursor phospho-MurNAc-pentapeptide from UDP-MurNAc-pentapeptide onto the lipid carrier undecaprenyl phosphate, yielding undecaprenyl-pyrophosphoryl-MurNAc-pentapeptide, known as lipid I. This Bacillus licheniformis (strain ATCC 14580 / DSM 13 / JCM 2505 / CCUG 7422 / NBRC 12200 / NCIMB 9375 / NCTC 10341 / NRRL NRS-1264 / Gibson 46) protein is Phospho-N-acetylmuramoyl-pentapeptide-transferase.